The following is a 255-amino-acid chain: Zinc D-Ala-D-Ala carboxypeptidase (255 aa).

The first 42 residues, 1–42, serve as a signal peptide directing secretion; sequence MRPRPIRLLLTALVGAGLAFAPVSAVAAPTATASASADVGAL. Asp-43 is subject to Blocked amino end (Asp). 2 cysteine pairs are disulfide-bonded: Cys-45–Cys-123 and Cys-136–Cys-184. Arg-180 serves as a coordination point for substrate. Zn(2+) is bound at residue His-196. A disulfide bond links Cys-212 and Cys-253. His-234 functions as the Proton donor in the catalytic mechanism. 2 residues coordinate Zn(2+): His-237 and His-239.

The protein belongs to the peptidase M15 family. It depends on Zn(2+) as a cofactor. In terms of processing, the N-terminus is partially blocked as a result of the cyclization of the first two amino acids into anhydroaspartylglycine imide.

The protein resides in the secreted. It catalyses the reaction Cleavage of the bond: (Ac)2-L-lysyl-D-alanyl-|-D-alanine.. Functionally, this enzyme catalyzes carboxypeptidation and transpeptidation reactions involved in bacterial cell wall metabolism. It effectively catalyzes the transfer of the N-alpha, N-epsilon-diacetyl-L-lysyl-D-alanyl electrophilic group of the standard tripeptide substrate N-alpha,N-epsilon-diacetyl-L-lysyl-D-alanyl-D-alanine to water. It also performs a weak beta-lactamase activity, hydrolyzing penicillin into penicilloate at a very low rate. This chain is Zinc D-Ala-D-Ala carboxypeptidase, found in Streptomyces albus G.